A 294-amino-acid polypeptide reads, in one-letter code: Putative lipid kinase SP_1045 (294 aa).

The region spanning 1-131 (MKKAMVIINP…IDIGKANDNY (131 aa)) is the DAGKc domain. ATP is bound by residues 9-13 (NPTSG), threonine 40, 66-72 (GDGTVNE), and threonine 93. Residues aspartate 212 and tyrosine 214 each contribute to the Mg(2+) site. Catalysis depends on aspartate 269, which acts as the Proton acceptor.

The protein belongs to the diacylglycerol/lipid kinase family. Mg(2+) is required as a cofactor.

Its function is as follows. May catalyze the ATP-dependent phosphorylation of lipids other than diacylglycerol (DAG). In fact, is not able to exhibit diacylglycerol kinase activity in vitro. This is Putative lipid kinase SP_1045 from Streptococcus pneumoniae serotype 4 (strain ATCC BAA-334 / TIGR4).